The primary structure comprises 188 residues: Probable manganese efflux pump MntP (188 aa).

The next 5 membrane-spanning stretches (helical) occupy residues 3-23, 66-86, 106-128, 143-163, and 168-188; these read ITAT…ASIG, LEWN…RMII, WLLV…GLAF, ATLI…SIIG, and ILGG…HFHG.

The protein belongs to the MntP (TC 9.B.29) family.

It is found in the cell inner membrane. In terms of biological role, probably functions as a manganese efflux pump. The polypeptide is Probable manganese efflux pump MntP (Escherichia coli O139:H28 (strain E24377A / ETEC)).